The sequence spans 737 residues: Polyribonucleotide nucleotidyltransferase (737 aa).

Asp-489 and Asp-495 together coordinate Mg(2+). The KH domain occupies 556–615 (PKIDTIKIDVDKIKIVIGKGGETIDKIIAETGVKIDIDEEGNVSIYSSDQDAINRAKEII). One can recognise an S1 motif domain in the interval 625–693 (DEVYRAKVVR…EKGRIDASMK (69 aa)). The disordered stretch occupies residues 691–737 (SMKALLPRPPKPEHDEKGEKSERPHRPRHHKDHKPKKEFTETPKDSE). Basic and acidic residues predominate over residues 700–714 (PKPEHDEKGEKSERP). Residues 715–724 (HRPRHHKDHK) show a composition bias toward basic residues. Basic and acidic residues predominate over residues 725 to 737 (PKKEFTETPKDSE).

This sequence belongs to the polyribonucleotide nucleotidyltransferase family. Mg(2+) is required as a cofactor.

It is found in the cytoplasm. It catalyses the reaction RNA(n+1) + phosphate = RNA(n) + a ribonucleoside 5'-diphosphate. Functionally, involved in mRNA degradation. Catalyzes the phosphorolysis of single-stranded polyribonucleotides processively in the 3'- to 5'-direction. This Streptococcus pneumoniae (strain 70585) protein is Polyribonucleotide nucleotidyltransferase.